The following is a 645-amino-acid chain: Sodium-dependent nutrient amino acid transporter 1 (645 aa).

Positions Met-1–Gly-48 are disordered. The Cytoplasmic segment spans residues Met-1 to Asn-51. Positions Asn-18–Asp-32 are enriched in low complexity. Over residues Thr-33–Gly-48 the composition is skewed to basic and acidic residues. Helical transmembrane passes span Trp-52–Val-72, Gly-85–Leu-105, and Thr-138–Val-158. Residues Asn-191 and Asn-205 are each glycosylated (N-linked (GlcNAc...) asparagine). Transmembrane regions (helical) follow at residues Ile-234–Ile-254, Ala-264–Val-284, Ala-313–Ser-333, Ile-347–Leu-367, Leu-407–Leu-427, Cys-454–Val-474, and Thr-480–Leu-500. An N-linked (GlcNAc...) asparagine glycan is attached at Asn-514. Helical transmembrane passes span Cys-522–Ile-542 and Ala-559–Ile-579.

The protein belongs to the sodium:neurotransmitter symporter (SNF) (TC 2.A.22) family.

The protein resides in the membrane. Its function is as follows. Unusual broad substrate spectrum amino acid:sodium cotransporter that promotes absorption of the D isomers of essential amino acids. Neutral amino acids are the preferred substrates, especially methionine and phenylalanine. The sequence is that of Sodium-dependent nutrient amino acid transporter 1 from Drosophila mojavensis (Fruit fly).